Consider the following 329-residue polypeptide: GTP 3',8-cyclase (329 aa).

In terms of domain architecture, Radical SAM core spans A8–A234. R17 contributes to the GTP binding site. 2 residues coordinate [4Fe-4S] cluster: C24 and C28. Y30 serves as a coordination point for S-adenosyl-L-methionine. C31 is a binding site for [4Fe-4S] cluster. R68 provides a ligand contact to GTP. Residue G72 coordinates S-adenosyl-L-methionine. Residue T99 participates in GTP binding. S123 contacts S-adenosyl-L-methionine. Residue K160 participates in GTP binding. M194 serves as a coordination point for S-adenosyl-L-methionine. C257 and C260 together coordinate [4Fe-4S] cluster. GTP is bound at residue R262–R264. Residue C274 coordinates [4Fe-4S] cluster.

It belongs to the radical SAM superfamily. MoaA family. As to quaternary structure, monomer and homodimer. The cofactor is [4Fe-4S] cluster.

It carries out the reaction GTP + AH2 + S-adenosyl-L-methionine = (8S)-3',8-cyclo-7,8-dihydroguanosine 5'-triphosphate + 5'-deoxyadenosine + L-methionine + A + H(+). Its pathway is cofactor biosynthesis; molybdopterin biosynthesis. Functionally, catalyzes the cyclization of GTP to (8S)-3',8-cyclo-7,8-dihydroguanosine 5'-triphosphate. The sequence is that of GTP 3',8-cyclase from Klebsiella pneumoniae (strain 342).